The following is a 480-amino-acid chain: GTPase Der (480 aa).

2 consecutive EngA-type G domains span residues P5–E170 and L178–M351. GTP contacts are provided by residues G11–S18, D58–I62, N123–D126, G184–S191, D231–V235, and N296–D299. The KH-like domain maps to F352–E436. The segment covering P438 to L454 has biased composition (polar residues). The tract at residues P438 to R480 is disordered. Basic and acidic residues predominate over residues R455–R480.

The protein belongs to the TRAFAC class TrmE-Era-EngA-EngB-Septin-like GTPase superfamily. EngA (Der) GTPase family. Associates with the 50S ribosomal subunit.

Functionally, GTPase that plays an essential role in the late steps of ribosome biogenesis. This chain is GTPase Der, found in Psychrobacter cryohalolentis (strain ATCC BAA-1226 / DSM 17306 / VKM B-2378 / K5).